The primary structure comprises 119 residues: Large ribosomal subunit protein uL18 (119 aa).

The protein belongs to the universal ribosomal protein uL18 family. In terms of assembly, part of the 50S ribosomal subunit; part of the 5S rRNA/L5/L18/L25 subcomplex. Contacts the 5S and 23S rRNAs.

Its function is as follows. This is one of the proteins that bind and probably mediate the attachment of the 5S RNA into the large ribosomal subunit, where it forms part of the central protuberance. This chain is Large ribosomal subunit protein uL18, found in Xanthomonas oryzae pv. oryzae (strain MAFF 311018).